A 122-amino-acid chain; its full sequence is T-cell receptor beta chain V region C5 (122 aa).

Positions isoleucine 1 to histidine 7 are cleaved as a signal peptide. Positions methionine 8 to glycine 103 are v segment. Cysteine 31 and cysteine 99 are joined by a disulfide. The segment at threonine 104 to leucine 108 is d segment. The j segment stretch occupies residues aspartate 109–leucine 122.

The protein is T-cell receptor beta chain V region C5 of Mus musculus (Mouse).